Reading from the N-terminus, the 211-residue chain is Redox-sensing transcriptional repressor Rex (211 aa).

Residues 18-57 constitute a DNA-binding region (H-T-H motif); sequence LYYRFLKNLHASGKQRVSSAELSEAVKVDSATIRRDFSYF. Residue 92–97 coordinates NAD(+); the sequence is GVGNLG.

The protein belongs to the transcriptional regulatory Rex family. As to quaternary structure, homodimer.

The protein resides in the cytoplasm. Its function is as follows. Modulates transcription in response to changes in cellular NADH/NAD(+) redox state. This chain is Redox-sensing transcriptional repressor Rex, found in Anoxybacillus flavithermus (strain DSM 21510 / WK1).